The sequence spans 69 residues: Cytochrome c oxidase subunit 8A, mitochondrial (69 aa).

The N-terminal 25 residues, 1–25, are a transit peptide targeting the mitochondrion; it reads MYVVTPLLLRGLTGSARRLPVPRAQ. Positions 2-19 match the SIFI-degron motif; the sequence is YVVTPLLLRGLTGSARRL. Residues 26–36 lie on the Mitochondrial matrix side of the membrane; that stretch reads VHSMPPEQKLG. A helical transmembrane segment spans residues 37-60; sequence VLELAIGFTSCMVTFLLPAGWIMS. At 61 to 69 the chain is on the mitochondrial intermembrane side; sequence HLESYKKRG.

This sequence belongs to the cytochrome c oxidase VIII family. In terms of assembly, component of the cytochrome c oxidase (complex IV, CIV), a multisubunit enzyme composed of 14 subunits. The complex is composed of a catalytic core of 3 subunits MT-CO1, MT-CO2 and MT-CO3, encoded in the mitochondrial DNA, and 11 supernumerary subunits COX4I, COX5A, COX5B, COX6A, COX6B, COX6C, COX7A, COX7B, COX7C, COX8 and NDUFA4, which are encoded in the nuclear genome. The complex exists as a monomer or a dimer and forms supercomplexes (SCs) in the inner mitochondrial membrane with NADH-ubiquinone oxidoreductase (complex I, CI) and ubiquinol-cytochrome c oxidoreductase (cytochrome b-c1 complex, complex III, CIII), resulting in different assemblies (supercomplex SCI(1)III(2)IV(1) and megacomplex MCI(2)III(2)IV(2)). Post-translationally, in response to mitochondrial stress, the precursor protein is ubiquitinated by the SIFI complex in the cytoplasm before mitochondrial import, leading to its degradation. Within the SIFI complex, UBR4 initiates ubiquitin chain that are further elongated or branched by KCMF1.

The protein resides in the mitochondrion inner membrane. It participates in energy metabolism; oxidative phosphorylation. In terms of biological role, component of the cytochrome c oxidase, the last enzyme in the mitochondrial electron transport chain which drives oxidative phosphorylation. The respiratory chain contains 3 multisubunit complexes succinate dehydrogenase (complex II, CII), ubiquinol-cytochrome c oxidoreductase (cytochrome b-c1 complex, complex III, CIII) and cytochrome c oxidase (complex IV, CIV), that cooperate to transfer electrons derived from NADH and succinate to molecular oxygen, creating an electrochemical gradient over the inner membrane that drives transmembrane transport and the ATP synthase. Cytochrome c oxidase is the component of the respiratory chain that catalyzes the reduction of oxygen to water. Electrons originating from reduced cytochrome c in the intermembrane space (IMS) are transferred via the dinuclear copper A center (CU(A)) of subunit 2 and heme A of subunit 1 to the active site in subunit 1, a binuclear center (BNC) formed by heme A3 and copper B (CU(B)). The BNC reduces molecular oxygen to 2 water molecules using 4 electrons from cytochrome c in the IMS and 4 protons from the mitochondrial matrix. The sequence is that of Cytochrome c oxidase subunit 8A, mitochondrial (COX8A) from Ateles belzebuth (White-bellied spider monkey).